Reading from the N-terminus, the 428-residue chain is C4-dicarboxylate transport protein (428 aa).

9 consecutive transmembrane segments (helical) span residues 8–28, 44–64, 76–96, 142–162, 184–204, 222–242, 289–309, 326–346, and 352–372; these read SLYV…HFYP, LIKM…IAGM, VALL…LIIV, IGAF…LFGF, VIFG…FGAM, LIIC…GSIA, VVGL…SIYL, IFHQ…AAGV, and IVLA…LALI.

This sequence belongs to the dicarboxylate/amino acid:cation symporter (DAACS) (TC 2.A.23) family.

The protein resides in the cell inner membrane. Responsible for the transport of dicarboxylates such as succinate, fumarate, and malate from the periplasm across the membrane. This Klebsiella pneumoniae subsp. pneumoniae (strain ATCC 700721 / MGH 78578) protein is C4-dicarboxylate transport protein.